The primary structure comprises 331 residues: MARLTSFLLLLSLICFVPLCLCDKSYGGKLFPGYYAHSCPQVNEIVRSVVAKAVARETRMAASLLRLHFHDCFVQGCDGSLLLDSSGRVATEKNSNPNSKSARGFDVVDQIKAELEKQCPGTVSCADVLTLAARDSSVLTGGPSWVVPLGRRDSRSASLSQSNNNIPAPNNTFQTILSKFNRQGLDITDLVALSGSHTIGFSRCTSFRQRLYNQSGNGSPDMTLEQSFAANLRQRCPKSGGDQILSVLDIISAASFDNSYFKNLIENKGLLNSDQVLFSSNEKSRELVKKYAEDQGEFFEQFAESMIKMGNISPLTGSSGEIRKNCRKINS.

An N-terminal signal peptide occupies residues 1 to 22 (MARLTSFLLLLSLICFVPLCLC). 4 cysteine pairs are disulfide-bonded: Cys39–Cys119, Cys72–Cys77, Cys125–Cys326, and Cys204–Cys236. The Proton acceptor role is filled by His70. Residues Asp71, Val74, Gly76, Asp78, and Ser80 each contribute to the Ca(2+) site. Pro167 serves as a coordination point for substrate. Asn170 is a glycosylation site (N-linked (GlcNAc...) asparagine). His197 contacts heme b. Thr198 is a Ca(2+) binding site. Residue Asn213 is glycosylated (N-linked (GlcNAc...) asparagine). The Ca(2+) site is built by Asp249, Ser252, and Asp257.

Belongs to the peroxidase family. Classical plant (class III) peroxidase subfamily. Requires heme b as cofactor. Ca(2+) is required as a cofactor.

It is found in the secreted. It catalyses the reaction 2 a phenolic donor + H2O2 = 2 a phenolic radical donor + 2 H2O. Its function is as follows. Removal of H(2)O(2), oxidation of toxic reductants, biosynthesis and degradation of lignin, suberization, auxin catabolism, response to environmental stresses such as wounding, pathogen attack and oxidative stress. These functions might be dependent on each isozyme/isoform in each plant tissue. The chain is Peroxidase 49 (PER49) from Arabidopsis thaliana (Mouse-ear cress).